The primary structure comprises 420 residues: MTLLALGINHKTAPVSLRERVTFSPDTIGEALDNLLQHPLVKGGVVLSTCNRTELYLSVEQQDNLYEQLIGWLCEYHQLNPRELKSSIYWHCDNEAVSHLMRVASGLDSLVLGEPQILGQVKKAFAESQHSHSLSSELERLFQKSFSVAKRIRTETEIGSNAVSVAFAACTLARQIFESLSELNILLVGAGETIELAARHLREHRVHHMMIANRTKEKAQVLADEVQAEVITLPEIDIRLAEADIVISSTASPLPIIGKGMVERALKLRRNQPMLLVDIAVPRDIEPDVEKLNNVYLYSVDDLQAIIQQNLAQRKAAAVQAECIVQQESRYFMDWLRSQSAVNSIREYRNQAEQMRAEMAAKALTAINQGADVEQAINQLTHQLMNRLIHAPTKSLQQAASNGDLERLNLLRDSLGLEHN.

Residues 49-52, S109, 114-116, and Q120 contribute to the substrate site; these read TCNR and EPQ. Residue C50 is the Nucleophile of the active site. An NADP(+)-binding site is contributed by 189-194; sequence GAGETI.

Belongs to the glutamyl-tRNA reductase family. As to quaternary structure, homodimer.

It catalyses the reaction (S)-4-amino-5-oxopentanoate + tRNA(Glu) + NADP(+) = L-glutamyl-tRNA(Glu) + NADPH + H(+). Its pathway is porphyrin-containing compound metabolism; protoporphyrin-IX biosynthesis; 5-aminolevulinate from L-glutamyl-tRNA(Glu): step 1/2. Catalyzes the NADPH-dependent reduction of glutamyl-tRNA(Glu) to glutamate 1-semialdehyde (GSA). The sequence is that of Glutamyl-tRNA reductase from Photorhabdus laumondii subsp. laumondii (strain DSM 15139 / CIP 105565 / TT01) (Photorhabdus luminescens subsp. laumondii).